A 138-amino-acid chain; its full sequence is Ribosome-binding factor A (138 aa).

The disordered stretch occupies residues 119–138 (RSPEVQRDLGPSNEKDDEQN).

The protein belongs to the RbfA family. Monomer. Binds 30S ribosomal subunits, but not 50S ribosomal subunits or 70S ribosomes.

Its subcellular location is the cytoplasm. One of several proteins that assist in the late maturation steps of the functional core of the 30S ribosomal subunit. Associates with free 30S ribosomal subunits (but not with 30S subunits that are part of 70S ribosomes or polysomes). Required for efficient processing of 16S rRNA. May interact with the 5'-terminal helix region of 16S rRNA. The chain is Ribosome-binding factor A from Agrobacterium fabrum (strain C58 / ATCC 33970) (Agrobacterium tumefaciens (strain C58)).